A 195-amino-acid polypeptide reads, in one-letter code: Protein GrpE (195 aa).

Residues 1 to 18 are compositionally biased toward basic and acidic residues; that stretch reads MDPKEKKTKQEEELKVDD. Residues 1–41 form a disordered region; that stretch reads MDPKEKKTKQEEELKVDDIQDTVEGQSQNEEATEATEPLTA.

This sequence belongs to the GrpE family. As to quaternary structure, homodimer.

Its subcellular location is the cytoplasm. Participates actively in the response to hyperosmotic and heat shock by preventing the aggregation of stress-denatured proteins, in association with DnaK and GrpE. It is the nucleotide exchange factor for DnaK and may function as a thermosensor. Unfolded proteins bind initially to DnaJ; upon interaction with the DnaJ-bound protein, DnaK hydrolyzes its bound ATP, resulting in the formation of a stable complex. GrpE releases ADP from DnaK; ATP binding to DnaK triggers the release of the substrate protein, thus completing the reaction cycle. Several rounds of ATP-dependent interactions between DnaJ, DnaK and GrpE are required for fully efficient folding. The polypeptide is Protein GrpE (Bacteroides fragilis (strain ATCC 25285 / DSM 2151 / CCUG 4856 / JCM 11019 / LMG 10263 / NCTC 9343 / Onslow / VPI 2553 / EN-2)).